Here is a 274-residue protein sequence, read N- to C-terminus: Energy-coupling factor transporter ATP-binding protein EcfA (274 aa).

Positions 2–235 constitute an ABC transporter domain; that stretch reads IRLENVSYNY…LSLRYLGLTP (234 aa). Position 35 to 42 (35 to 42) interacts with ATP; sequence GKNGSGKS.

Belongs to the ABC transporter superfamily. Energy-coupling factor EcfA family. As to quaternary structure, forms a stable energy-coupling factor (ECF) transporter complex composed of 2 membrane-embedded substrate-binding proteins (S component), 2 ATP-binding proteins (A component) and 2 transmembrane proteins (T component).

The protein resides in the cell membrane. Its function is as follows. ATP-binding (A) component of a common energy-coupling factor (ECF) ABC-transporter complex. Unlike classic ABC transporters this ECF transporter provides the energy necessary to transport a number of different substrates. The chain is Energy-coupling factor transporter ATP-binding protein EcfA from Methanosarcina acetivorans (strain ATCC 35395 / DSM 2834 / JCM 12185 / C2A).